Consider the following 461-residue polypeptide: Photosystem II CP43 reaction center protein (461 aa).

A propeptide spanning residues 1–2 (ME) is cleaved from the precursor. The residue at position 3 (Thr3) is an N-acetylthreonine. At Thr3 the chain carries Phosphothreonine. The next 5 membrane-spanning stretches (helical) occupy residues 57-81 (LFEVAHFVPEKPMYEQGLILLPHLA), 122-143 (LLGPETLEESFPFFGYVWKDRN), 166-188 (KALYFGGVYDTWAPGGGDVRKIS), 243-263 (KPFAWARRALVWSGEAYLSYS), and 279-300 (WFNNTAYPSEFYGPTGPEASQA). [CaMn4O5] cluster is bound at residue Glu355. The helical transmembrane segment at 435–459 (RARAAAAGFEKGIDRDFEPVLSMTP) threads the bilayer.

It belongs to the PsbB/PsbC family. PsbC subfamily. PSII is composed of 1 copy each of membrane proteins PsbA, PsbB, PsbC, PsbD, PsbE, PsbF, PsbH, PsbI, PsbJ, PsbK, PsbL, PsbM, PsbT, PsbX, PsbY, PsbZ, Psb30/Ycf12, at least 3 peripheral proteins of the oxygen-evolving complex and a large number of cofactors. It forms dimeric complexes. Binds multiple chlorophylls and provides some of the ligands for the Ca-4Mn-5O cluster of the oxygen-evolving complex. It may also provide a ligand for a Cl- that is required for oxygen evolution. PSII binds additional chlorophylls, carotenoids and specific lipids. serves as cofactor.

The protein localises to the plastid. Its subcellular location is the chloroplast thylakoid membrane. Its function is as follows. One of the components of the core complex of photosystem II (PSII). It binds chlorophyll and helps catalyze the primary light-induced photochemical processes of PSII. PSII is a light-driven water:plastoquinone oxidoreductase, using light energy to abstract electrons from H(2)O, generating O(2) and a proton gradient subsequently used for ATP formation. In Trachelium caeruleum (Blue throatwort), this protein is Photosystem II CP43 reaction center protein.